Here is a 325-residue protein sequence, read N- to C-terminus: GMP reductase (325 aa).

Catalysis depends on Cys-173, which acts as the Thioimidate intermediate. 202-225 contributes to the NADP(+) binding site; that stretch reads IIADGGIRSHGDIAKSVRFGATMV.

The protein belongs to the IMPDH/GMPR family. GuaC type 2 subfamily.

The catalysed reaction is IMP + NH4(+) + NADP(+) = GMP + NADPH + 2 H(+). Catalyzes the irreversible NADPH-dependent deamination of GMP to IMP. It functions in the conversion of nucleobase, nucleoside and nucleotide derivatives of G to A nucleotides, and in maintaining the intracellular balance of A and G nucleotides. This is GMP reductase from Acidovorax ebreus (strain TPSY) (Diaphorobacter sp. (strain TPSY)).